Consider the following 264-residue polypeptide: Small ribosomal subunit protein eS1 (264 aa).

The disordered stretch occupies residues 233 to 264; it reads GEGGGAGKPAGDETGAKVERADGYEPPVQESV. Residues 242–255 are compositionally biased toward basic and acidic residues; sequence AGDETGAKVERADG.

It belongs to the eukaryotic ribosomal protein eS1 family. Component of the small ribosomal subunit. Mature ribosomes consist of a small (40S) and a large (60S) subunit. The 40S subunit contains about 33 different proteins and 1 molecule of RNA (18S). The 60S subunit contains about 49 different proteins and 3 molecules of RNA (28S, 5.8S and 5S). Part of the small subunit (SSU) processome, composed of more than 70 proteins and the RNA chaperone small nucleolar RNA (snoRNA) U3.

It is found in the cytoplasm. The protein resides in the nucleus. The protein localises to the nucleolus. Its function is as follows. Component of the small ribosomal subunit. The ribosome is a large ribonucleoprotein complex responsible for the synthesis of proteins in the cell. Part of the small subunit (SSU) processome, first precursor of the small eukaryotic ribosomal subunit. During the assembly of the SSU processome in the nucleolus, many ribosome biogenesis factors, an RNA chaperone and ribosomal proteins associate with the nascent pre-rRNA and work in concert to generate RNA folding, modifications, rearrangements and cleavage as well as targeted degradation of pre-ribosomal RNA by the RNA exosome. May play a role during erythropoiesis. This Xenopus tropicalis (Western clawed frog) protein is Small ribosomal subunit protein eS1 (rps3a).